Consider the following 371-residue polypeptide: Queuine tRNA-ribosyltransferase (371 aa).

Aspartate 90 serves as the catalytic Proton acceptor. Residues 90-94 (DSGGF), aspartate 144, glutamine 188, and glycine 215 each bind substrate. The RNA binding stretch occupies residues 246-252 (GVGTPED). Aspartate 265 serves as the catalytic Nucleophile. The interval 270–274 (TRNAR) is RNA binding; important for wobble base 34 recognition. Zn(2+) contacts are provided by cysteine 303, cysteine 305, cysteine 308, and histidine 334.

Belongs to the queuine tRNA-ribosyltransferase family. As to quaternary structure, homodimer. Within each dimer, one monomer is responsible for RNA recognition and catalysis, while the other monomer binds to the replacement base PreQ1. Zn(2+) is required as a cofactor.

The enzyme catalyses 7-aminomethyl-7-carbaguanine + guanosine(34) in tRNA = 7-aminomethyl-7-carbaguanosine(34) in tRNA + guanine. The protein operates within tRNA modification; tRNA-queuosine biosynthesis. In terms of biological role, catalyzes the base-exchange of a guanine (G) residue with the queuine precursor 7-aminomethyl-7-deazaguanine (PreQ1) at position 34 (anticodon wobble position) in tRNAs with GU(N) anticodons (tRNA-Asp, -Asn, -His and -Tyr). Catalysis occurs through a double-displacement mechanism. The nucleophile active site attacks the C1' of nucleotide 34 to detach the guanine base from the RNA, forming a covalent enzyme-RNA intermediate. The proton acceptor active site deprotonates the incoming PreQ1, allowing a nucleophilic attack on the C1' of the ribose to form the product. After dissociation, two additional enzymatic reactions on the tRNA convert PreQ1 to queuine (Q), resulting in the hypermodified nucleoside queuosine (7-(((4,5-cis-dihydroxy-2-cyclopenten-1-yl)amino)methyl)-7-deazaguanosine). This chain is Queuine tRNA-ribosyltransferase, found in Neisseria meningitidis serogroup A / serotype 4A (strain DSM 15465 / Z2491).